Reading from the N-terminus, the 172-residue chain is Protein sym-1 (172 aa).

Helical transmembrane passes span 13 to 33 (PLLT…VAAQ), 52 to 72 (MVLY…RFLQ), 94 to 114 (GLFA…LEGT), 128 to 148 (LSTN…VVPL), and 152 to 172 (VLFV…LNGQ).

This sequence belongs to the peroxisomal membrane protein PXMP2/4 family.

The protein resides in the mitochondrion inner membrane. Functionally, may be involved in cellular response to stress. Required to maintain mitochondrial DNA (mtDNA) integrity and stability. The polypeptide is Protein sym-1 (sym-1) (Neurospora crassa (strain ATCC 24698 / 74-OR23-1A / CBS 708.71 / DSM 1257 / FGSC 987)).